The sequence spans 399 residues: Glutathione-independent formaldehyde dehydrogenase (399 aa).

Cys-47 provides a ligand contact to Zn(2+). NAD(+) contacts are provided by Gly-48, Ser-49, and His-52. Residues His-68, Cys-98, Cys-101, Cys-104, Cys-112, and Asp-170 each coordinate Zn(2+). Residues Val-198, Asp-218, Arg-223, Val-263, Arg-268, Pro-300, Gln-338, and Thr-339 each contribute to the NAD(+) site.

The protein belongs to the zinc-containing alcohol dehydrogenase family. Homotetramer. It depends on Zn(2+) as a cofactor.

It carries out the reaction formaldehyde + NAD(+) + H2O = formate + NADH + 2 H(+). The enzyme catalyses acetaldehyde + NAD(+) + H2O = acetate + NADH + 2 H(+). Functionally, dehydrogenase that catalyzes the NAD(+)-dependent oxidation of formaldehyde and acetaldehyde. Shows no detectable activity against either aldehydes with longer carbon chains or ethanol. The polypeptide is Glutathione-independent formaldehyde dehydrogenase (Pseudomonas aeruginosa (strain LESB58)).